A 436-amino-acid polypeptide reads, in one-letter code: GTPase Der (436 aa).

EngA-type G domains lie at 4-167 (PTVA…PTEA) and 175-351 (IKFS…QSQN). Residues 10–17 (GRPNVGKS), 57–61 (DTGGI), 119–122 (NKVD), 181–188 (GRPNVGKS), 229–233 (DTAGM), and 294–297 (NKWD) contribute to the GTP site. The KH-like domain maps to 352–436 (TRIPSAVLND…PIRLIARKRK (85 aa)).

Belongs to the TRAFAC class TrmE-Era-EngA-EngB-Septin-like GTPase superfamily. EngA (Der) GTPase family. Associates with the 50S ribosomal subunit.

GTPase that plays an essential role in the late steps of ribosome biogenesis. This chain is GTPase Der, found in Streptococcus mutans serotype c (strain ATCC 700610 / UA159).